The primary structure comprises 319 residues: Transcription elongation factor A protein 1 (319 aa).

The TFIIS N-terminal domain maps to 1–78 (MQEIIKCREQ…DKWKQDIEGT (78 aa)). Over residues 78–106 (TSATTTSSSSSSSSSTTSTTTTKTASPSE) the composition is skewed to low complexity. The segment at 78 to 146 (TSATTTSSSS…TTPKTSSPPI (69 aa)) is disordered. The span at 107-122 (SLKRKSISEDTSDRPT) shows a compositional bias: basic and acidic residues. Positions 133-146 (ISPPTTPKTSSPPI) are enriched in low complexity. One can recognise a TFIIS central domain in the interval 160 to 272 (LRNKTIQLFV…ASMLGQNNEA (113 aa)). A TFIIS-type zinc finger spans residues 275-317 (DQFQCGKCKQRKCTYTQLQTRSADEPPTTFVKCCVKGCGNRWR). The Zn(2+) site is built by C279, C282, C307, and C312.

This sequence belongs to the TFS-II family.

Its subcellular location is the nucleus. Functionally, necessary for efficient RNA polymerase II transcription elongation past template-encoded arresting sites. The arresting sites in DNA have the property of trapping a certain fraction of elongating RNA polymerases that pass through, resulting in locked ternary complexes. Cleavage of the nascent transcript by S-II allows the resumption of elongation from the new 3'-terminus. The protein is Transcription elongation factor A protein 1 (tcea1) of Dictyostelium discoideum (Social amoeba).